Consider the following 93-residue polypeptide: MPRSLKKGPFVDGHLLKKVDAQNEKNTKQVIKTWSRRSTIIPDFIGHTFAVHDGRKHVPVFVTEAMVGHKLGEFAPTRTFKGHIKDDRKAKRR.

The protein belongs to the universal ribosomal protein uS19 family.

In terms of biological role, protein S19 forms a complex with S13 that binds strongly to the 16S ribosomal RNA. This is Small ribosomal subunit protein uS19 from Mycolicibacterium paratuberculosis (strain ATCC BAA-968 / K-10) (Mycobacterium paratuberculosis).